The chain runs to 149 residues: Nucleoside diphosphate kinase (149 aa).

The ATP site is built by Lys9, Phe57, Arg85, Thr91, Arg102, and Asn112. The active-site Pros-phosphohistidine intermediate is the His115.

Belongs to the NDK family. Mg(2+) serves as cofactor.

Its subcellular location is the cytoplasm. The catalysed reaction is a 2'-deoxyribonucleoside 5'-diphosphate + ATP = a 2'-deoxyribonucleoside 5'-triphosphate + ADP. It catalyses the reaction a ribonucleoside 5'-diphosphate + ATP = a ribonucleoside 5'-triphosphate + ADP. Its function is as follows. Major role in the synthesis of nucleoside triphosphates other than ATP. The ATP gamma phosphate is transferred to the NDP beta phosphate via a ping-pong mechanism, using a phosphorylated active-site intermediate. This chain is Nucleoside diphosphate kinase, found in Methanosarcina acetivorans (strain ATCC 35395 / DSM 2834 / JCM 12185 / C2A).